A 112-amino-acid chain; its full sequence is Peptidyl-tRNA hydrolase (112 aa).

Residues 64–99 (EEAKRAGLPTGLISDAGRTQLEPGTPTALAIGPAPD) are disordered.

This sequence belongs to the PTH2 family.

The protein localises to the cytoplasm. It carries out the reaction an N-acyl-L-alpha-aminoacyl-tRNA + H2O = an N-acyl-L-amino acid + a tRNA + H(+). In terms of biological role, the natural substrate for this enzyme may be peptidyl-tRNAs which drop off the ribosome during protein synthesis. This is Peptidyl-tRNA hydrolase from Halobacterium salinarum (strain ATCC 29341 / DSM 671 / R1).